Reading from the N-terminus, the 289-residue chain is MEVGFLGLGIMGKAMSMNLLKNGFKVTVWNRTLSKCDELVEHGASVCESPAEVIKKCKYTIAMLSDPCAALSVVFDKGGVLEQICEGKGYIDMSTVDAETSLKINEAITGKGGRFVEGPVSGSKKPAEDGQLIILAAGDKALFEESIPAFDVLGKRSFYLGQVGNGAKMKLIVNMIMGSMMNAFSEGLVLADKSGLSSDTLLDILDLGAMTNPMFKGKGPSMNKSSYPPAFPLKHQQKDMRLALALGDENAVSMPVAAAANEAFKKARSLGLGDLDFSAVIEAVKFSRE.

An N-acetylmethionine modification is found at M1. Residues 4-18 and T95 each bind NADP(+); that span reads GFLGLGIMGKAMSMN. The active site involves K170. K238 is an NADP(+) binding site.

The protein belongs to the HIBADH-related family. NP60 subfamily.

Its subcellular location is the cytoplasm. The protein resides in the cytosol. It catalyses the reaction glycolate + NADP(+) = glyoxylate + NADPH + H(+). The enzyme catalyses 4-hydroxybutanoate + NADP(+) = succinate semialdehyde + NADPH + H(+). With respect to regulation, the ratio of NADPH/NADP(+) may regulate enzymatic activity. Functionally, catalyzes the NADPH-dependent reduction of glyoxylate to glycolate as well as succinic semialdehyde (SSA) to gamma-hydroxybutyrate in vitro. May function in redox homeostasis and play a role in oxidative stress tolerance by detoxifying glyoxylate and SSA generated in glycolate metabolism and GABA metabolism, respectively. The protein is Glyoxylate/succinic semialdehyde reductase 1 (GLYR1) of Arabidopsis thaliana (Mouse-ear cress).